The sequence spans 398 residues: NADH-quinone oxidoreductase subunit D (398 aa).

Belongs to the complex I 49 kDa subunit family. In terms of assembly, NDH-1 is composed of 14 different subunits. Subunits NuoB, C, D, E, F, and G constitute the peripheral sector of the complex.

It is found in the cell inner membrane. It carries out the reaction a quinone + NADH + 5 H(+)(in) = a quinol + NAD(+) + 4 H(+)(out). Its function is as follows. NDH-1 shuttles electrons from NADH, via FMN and iron-sulfur (Fe-S) centers, to quinones in the respiratory chain. The immediate electron acceptor for the enzyme in this species is believed to be ubiquinone. Couples the redox reaction to proton translocation (for every two electrons transferred, four hydrogen ions are translocated across the cytoplasmic membrane), and thus conserves the redox energy in a proton gradient. The sequence is that of NADH-quinone oxidoreductase subunit D from Bradyrhizobium diazoefficiens (strain JCM 10833 / BCRC 13528 / IAM 13628 / NBRC 14792 / USDA 110).